Consider the following 332-residue polypeptide: Holliday junction branch migration complex subunit RuvB (332 aa).

Positions 1-181 (MSRILDNEMM…FGITGHMEYY (181 aa)) are large ATPase domain (RuvB-L). Residues Leu20, Arg21, Gly62, Lys65, Thr66, Thr67, 128–130 (EDF), Arg171, Tyr181, and Arg218 contribute to the ATP site. Thr66 serves as a coordination point for Mg(2+). The segment at 182-252 (AHADLTEIVE…ITDKALTMLD (71 aa)) is small ATPAse domain (RuvB-S). The interval 255–332 (HEGLDYVDQK…EHLGYEYSEK (78 aa)) is head domain (RuvB-H). Residues Arg291, Arg310, Arg312, and Arg315 each contribute to the DNA site.

Belongs to the RuvB family. In terms of assembly, homohexamer. Forms an RuvA(8)-RuvB(12)-Holliday junction (HJ) complex. HJ DNA is sandwiched between 2 RuvA tetramers; dsDNA enters through RuvA and exits via RuvB. An RuvB hexamer assembles on each DNA strand where it exits the tetramer. Each RuvB hexamer is contacted by two RuvA subunits (via domain III) on 2 adjacent RuvB subunits; this complex drives branch migration. In the full resolvosome a probable DNA-RuvA(4)-RuvB(12)-RuvC(2) complex forms which resolves the HJ.

The protein resides in the cytoplasm. It catalyses the reaction ATP + H2O = ADP + phosphate + H(+). Its function is as follows. The RuvA-RuvB-RuvC complex processes Holliday junction (HJ) DNA during genetic recombination and DNA repair, while the RuvA-RuvB complex plays an important role in the rescue of blocked DNA replication forks via replication fork reversal (RFR). RuvA specifically binds to HJ cruciform DNA, conferring on it an open structure. The RuvB hexamer acts as an ATP-dependent pump, pulling dsDNA into and through the RuvAB complex. RuvB forms 2 homohexamers on either side of HJ DNA bound by 1 or 2 RuvA tetramers; 4 subunits per hexamer contact DNA at a time. Coordinated motions by a converter formed by DNA-disengaged RuvB subunits stimulates ATP hydrolysis and nucleotide exchange. Immobilization of the converter enables RuvB to convert the ATP-contained energy into a lever motion, pulling 2 nucleotides of DNA out of the RuvA tetramer per ATP hydrolyzed, thus driving DNA branch migration. The RuvB motors rotate together with the DNA substrate, which together with the progressing nucleotide cycle form the mechanistic basis for DNA recombination by continuous HJ branch migration. Branch migration allows RuvC to scan DNA until it finds its consensus sequence, where it cleaves and resolves cruciform DNA. This Streptococcus pneumoniae serotype 4 (strain ATCC BAA-334 / TIGR4) protein is Holliday junction branch migration complex subunit RuvB.